The following is an 84-amino-acid chain: Exodeoxyribonuclease 7 small subunit (84 aa).

This sequence belongs to the XseB family. In terms of assembly, heterooligomer composed of large and small subunits.

The protein localises to the cytoplasm. It carries out the reaction Exonucleolytic cleavage in either 5'- to 3'- or 3'- to 5'-direction to yield nucleoside 5'-phosphates.. Bidirectionally degrades single-stranded DNA into large acid-insoluble oligonucleotides, which are then degraded further into small acid-soluble oligonucleotides. The chain is Exodeoxyribonuclease 7 small subunit from Bartonella quintana (strain Toulouse) (Rochalimaea quintana).